Here is a 64-residue protein sequence, read N- to C-terminus: Large ribosomal subunit protein bL35 (64 aa).

The segment at 1–64 (MPKNKTNSGA…RKSIKKLLGK (64 aa)) is disordered.

It belongs to the bacterial ribosomal protein bL35 family.

The protein is Large ribosomal subunit protein bL35 of Beutenbergia cavernae (strain ATCC BAA-8 / DSM 12333 / CCUG 43141 / JCM 11478 / NBRC 16432 / NCIMB 13614 / HKI 0122).